We begin with the raw amino-acid sequence, 369 residues long: Deacetylase EF_0837 (369 aa).

Zn(2+) contacts are provided by histidine 58, histidine 60, lysine 152, histidine 186, histidine 209, and aspartate 270. Lysine 152 carries the post-translational modification N6-carboxylysine.

This sequence belongs to the metallo-dependent hydrolases superfamily. Atu3266/EF_0837 deacetylase family. The cofactor is Zn(2+).

Functionally, esterase that can catalyze the deacetylation of acetyl-(R)-mandelate, but with very low efficiency (in vitro). This is Deacetylase EF_0837 from Enterococcus faecalis (strain ATCC 700802 / V583).